The primary structure comprises 281 residues: Glyoxalase 1 (281 aa).

VOC domains are found at residues 4 to 127 (RALH…IGKA) and 132 to 251 (KVLR…FVGD).

Belongs to the glyoxalase I family. As to expression, expressed in the following tissues in both larvae and adults: pharynx, pharyngeal-intestinal valve, intestine, anal sphincter, vulval muscle, seam cells and the nervous system.

Thought to act as a glyoxalase. May remove methylglyoxal from mitochondrial proteins. Has roles in reducing oxidative stress and increasing lifespan. The protein is Glyoxalase 1 (glod-4) of Caenorhabditis elegans.